A 469-amino-acid chain; its full sequence is Probable monogalactosyldiacylglycerol synthase 2, chloroplastic (469 aa).

The N-terminal 42 residues, 1–42, are a transit peptide targeting the chloroplast; that stretch reads MVISVATPRRSIRDAVLGGVLGAGGRQLYQPLRCAFYDGAAG.

The protein belongs to the glycosyltransferase 28 family.

Its subcellular location is the plastid. It localises to the chloroplast membrane. It catalyses the reaction a 1,2-diacyl-sn-glycerol + UDP-alpha-D-galactose = a 1,2-diacyl-3-O-(beta-D-galactosyl)-sn-glycerol + UDP + H(+). In terms of biological role, involved in the synthesis of the major structural component of photosynthetic membranes. In Oryza sativa subsp. indica (Rice), this protein is Probable monogalactosyldiacylglycerol synthase 2, chloroplastic (MGD2).